Reading from the N-terminus, the 78-residue chain is Probable [Fe-S]-dependent transcriptional repressor (78 aa).

Positions 56, 61, 64, and 70 each coordinate iron-sulfur cluster.

This sequence belongs to the FeoC family.

Functionally, may function as a transcriptional regulator that controls feoABC expression. The protein is Probable [Fe-S]-dependent transcriptional repressor of Escherichia coli O127:H6 (strain E2348/69 / EPEC).